The chain runs to 253 residues: uncharacterized protein (253 aa).

This is an uncharacterized protein from Caenorhabditis elegans.